A 129-amino-acid polypeptide reads, in one-letter code: Large ribosomal subunit protein uL22 (129 aa).

The protein belongs to the universal ribosomal protein uL22 family. In terms of assembly, part of the 50S ribosomal subunit.

Its function is as follows. This protein binds specifically to 23S rRNA; its binding is stimulated by other ribosomal proteins, e.g. L4, L17, and L20. It is important during the early stages of 50S assembly. It makes multiple contacts with different domains of the 23S rRNA in the assembled 50S subunit and ribosome. Functionally, the globular domain of the protein is located near the polypeptide exit tunnel on the outside of the subunit, while an extended beta-hairpin is found that lines the wall of the exit tunnel in the center of the 70S ribosome. The protein is Large ribosomal subunit protein uL22 of Prochlorococcus marinus (strain MIT 9211).